We begin with the raw amino-acid sequence, 407 residues long: ETS domain-containing protein Elk-3 (407 aa).

The ETS DNA-binding region spans 5–85 (ITLWQFLLQL…IGQKFVYKFV (81 aa)). A Glycyl lysine isopeptide (Lys-Gly) (interchain with G-Cter in SUMO2) cross-link involves residue Lys92. Residue Ser115 is modified to Phosphoserine. Residue Lys165 forms a Glycyl lysine isopeptide (Lys-Gly) (interchain with G-Cter in SUMO2) linkage. Disordered stretches follow at residues 234–253 (SSAS…SPLP) and 271–298 (LEPL…KGLE). Positions 273–277 (PLNLS) match the CTBP-binding motif motif. A Phosphoserine modification is found at Ser396.

The protein belongs to the ETS family. As to quaternary structure, interacts with CTBP1.

The protein localises to the nucleus. Functionally, may be a negative regulator of transcription, but can activate transcription when coexpressed with Ras, Src or Mos. Forms a ternary complex with the serum response factor and the ETS and SRF motifs of the Fos serum response element. The polypeptide is ETS domain-containing protein Elk-3 (ELK3) (Homo sapiens (Human)).